The chain runs to 353 residues: Nicotinate-nucleotide--dimethylbenzimidazole phosphoribosyltransferase (353 aa).

Glu-318 (proton acceptor) is an active-site residue.

It belongs to the CobT family.

It carries out the reaction 5,6-dimethylbenzimidazole + nicotinate beta-D-ribonucleotide = alpha-ribazole 5'-phosphate + nicotinate + H(+). Its pathway is nucleoside biosynthesis; alpha-ribazole biosynthesis; alpha-ribazole from 5,6-dimethylbenzimidazole: step 1/2. In terms of biological role, catalyzes the synthesis of alpha-ribazole-5'-phosphate from nicotinate mononucleotide (NAMN) and 5,6-dimethylbenzimidazole (DMB). The sequence is that of Nicotinate-nucleotide--dimethylbenzimidazole phosphoribosyltransferase from Roseiflexus castenholzii (strain DSM 13941 / HLO8).